Here is a 609-residue protein sequence, read N- to C-terminus: Replication factor A protein 1 (609 aa).

Residues 130–152 (QNEQNNASAPRTGISTSTNSFYG) are compositionally biased toward polar residues. Residues 130 to 166 (QNEQNNASAPRTGISTSTNSFYGNNAAATAPAPPPMM) form a disordered region. The OB DNA-binding region spans 192-278 (WTIRARVTNK…NEYELMFERD (87 aa)). The C4-type zinc-finger motif lies at 477–498 (CPAADCNKKVFDQGGSWRCEKC).

This sequence belongs to the replication factor A protein 1 family. In terms of assembly, component of the heterotrimeric canonical replication protein A complex (RPA).

It is found in the nucleus. As part of the replication protein A (RPA/RP-A), a single-stranded DNA-binding heterotrimeric complex, may play an essential role in DNA replication, recombination and repair. Binds and stabilizes single-stranded DNA intermediates, preventing complementary DNA reannealing and recruiting different proteins involved in DNA metabolism. This Schizosaccharomyces pombe (strain 972 / ATCC 24843) (Fission yeast) protein is Replication factor A protein 1 (ssb1).